The sequence spans 486 residues: MQLTDLTMLELAAKLAAGEASSEEATRASLARIQQVDPKVRAFLRVDEAGALAAARASDARRKSGSPASALDGVPLGLKDIFLTEGVETTAGSRILEGFVPPYDATVVRLLKEAGLPLVGKLNMDEFAMGSSNESSAFFPSHNPWDVSRTPGGSSGGSAAAVAAREVFGALGTDTGGSIRQPAALTNTVGLKPTYGRVSRFGVIAFASSLDQPGPMTRTVADAAALLQVIARPDAQDATSADAPVPDYSADLEAGVRGLKLGVPREYFTEGMDPEVEAAVREALREYERLGATLVDVSLPHTKYALATYYLIAPAEASSNLARYDGVRFGLRAKDARSLRDVYALTREQGFGAEVKRRIMLGTFALSSGYYDAHYLRAQKVRTLIREDFTRAFQQVDALLSPTSPVPAFKLGEKVEDPLSMYLMDIYTLPCNLAGLPGLSVPCGFTKAGLPVGLQILGRPFDEAGLLRIARAYEREHDFFRRSAPL.

Active-site charge relay system residues include K79 and S154. Catalysis depends on S178, which acts as the Acyl-ester intermediate.

This sequence belongs to the amidase family. GatA subfamily. As to quaternary structure, heterotrimer of A, B and C subunits.

The enzyme catalyses L-glutamyl-tRNA(Gln) + L-glutamine + ATP + H2O = L-glutaminyl-tRNA(Gln) + L-glutamate + ADP + phosphate + H(+). Allows the formation of correctly charged Gln-tRNA(Gln) through the transamidation of misacylated Glu-tRNA(Gln) in organisms which lack glutaminyl-tRNA synthetase. The reaction takes place in the presence of glutamine and ATP through an activated gamma-phospho-Glu-tRNA(Gln). The polypeptide is Glutamyl-tRNA(Gln) amidotransferase subunit A (Myxococcus xanthus (strain DK1622)).